A 318-amino-acid chain; its full sequence is Acetylglutamate kinase (318 aa).

Substrate is bound by residues 80-81 (GG), Arg-102, and Asn-203.

It belongs to the acetylglutamate kinase family. ArgB subfamily.

It localises to the cytoplasm. It carries out the reaction N-acetyl-L-glutamate + ATP = N-acetyl-L-glutamyl 5-phosphate + ADP. It participates in amino-acid biosynthesis; L-arginine biosynthesis; N(2)-acetyl-L-ornithine from L-glutamate: step 2/4. In terms of biological role, catalyzes the ATP-dependent phosphorylation of N-acetyl-L-glutamate. The polypeptide is Acetylglutamate kinase (Bifidobacterium adolescentis (strain ATCC 15703 / DSM 20083 / NCTC 11814 / E194a)).